The sequence spans 322 residues: Aldo-keto reductase family 1 member C13 (322 aa).

Residues 20-24 (GFGTY) and D50 contribute to the NAD(+) site. Residue Y55 is the Proton donor of the active site. Residue H117 coordinates substrate. Residues 166–167 (SN), Q190, 216–224 (FGALGTQRY), and 270–280 (QSFYESEMKEN) contribute to the NAD(+) site.

Belongs to the aldo/keto reductase family. As to quaternary structure, monomer. In terms of processing, the N-terminus is blocked.

The catalysed reaction is morphine + NAD(+) = morphinone + NADH + H(+). The enzyme catalyses morphine + NADP(+) = morphinone + NADPH + H(+). With respect to regulation, strongly inhibited by sulfhydryl reagents and ketamine, but not by pyrazole, barbital and indomethacine. Functionally, catalyzes the dehydrogenation of morphine to morphinone. The enzyme also exhibits significant activity for a variety of cyclic and alicyclic alcohols. In addition to xenobiotics, the enzyme catalyzes the dehydrogenation of 17-beta-hydroxysteroids with much higher affinities than morphine. Uses both NAD and NADP, but the activity is much greater with NAD than with NADP. The chain is Aldo-keto reductase family 1 member C13 (AKR1C13) from Mesocricetus auratus (Golden hamster).